Here is a 454-residue protein sequence, read N- to C-terminus: Zinc finger protein 474 (454 aa).

The disordered stretch occupies residues 48-85; it reads RGEKIKTNPRKNRPGTVILSKQSSRRIMSGSQPRPPVI. Positions 66-79 are enriched in polar residues; that stretch reads LSKQSSRRIMSGSQ. Residues 91–120 form a C2HC/C3H-type 1 zinc finger; it reads GFRVCYICGREFGSQSLGIHEPQCLEKWRV. Residues Cys-95, Cys-98, His-110, and Cys-114 each contribute to the Zn(2+) site. The segment at 125-146 is disordered; it reads LPKHLRRPEPSKPPPFSGSGSY. 5 C2HC/C3H-type zinc fingers span residues 162-191, 218-247, 281-310, 352-381, and 425-454; these read QLLP…KVEG, RTVI…KWKV, QLVS…QPSG, PTIV…KWHN, and QLVP…KVAK. 8 residues coordinate Zn(2+): Cys-166, Cys-169, His-181, Cys-185, Cys-222, Cys-225, His-237, and Cys-241. Residues 256-282 are disordered; it reads FRQPLPQKPQPLLTGQPKHAGPRQGQL. Zn(2+)-binding residues include Cys-285, Cys-288, His-300, Cys-304, Cys-356, Cys-359, His-371, Cys-375, Cys-429, Cys-432, His-444, and Cys-448. The segment at 299 to 345 is disordered; the sequence is VHQRSCKAQPSGPKVQDLTLGSRGGLKESTNPKPQRNMAAPPVTDKP.

Zn(2+) serves as cofactor.

This is Zinc finger protein 474 (ZNF474) from Bos taurus (Bovine).